Consider the following 69-residue polypeptide: MKYLLIALVRGYQYAISPFLGRSCRYVPTCSEYMVDAVQKHGAFRGGWLGVKRVCRCHPWHPGGYDPVP.

The protein belongs to the UPF0161 family.

The protein resides in the cell inner membrane. Functionally, could be involved in insertion of integral membrane proteins into the membrane. The chain is Putative membrane protein insertion efficiency factor from Dechloromonas aromatica (strain RCB).